We begin with the raw amino-acid sequence, 450 residues long: Bifunctional protein GlmU (450 aa).

The segment at 1 to 229 (MRRHAIILAA…VEEIMGVNDR (229 aa)) is pyrophosphorylase. Residues 8–11 (LAAG), lysine 22, glutamine 72, and 77–78 (GT) contribute to the UDP-N-acetyl-alpha-D-glucosamine site. Aspartate 102 is a Mg(2+) binding site. Residues glycine 139, glutamate 154, and asparagine 227 each contribute to the UDP-N-acetyl-alpha-D-glucosamine site. Asparagine 227 is a Mg(2+) binding site. A linker region spans residues 230-250 (VMLSQAEKAMQRRTNHYHMLN). The segment at 251–450 (GVTIIDPDST…RQTTKEGYRK (200 aa)) is N-acetyltransferase. Positions 332 and 350 each coordinate UDP-N-acetyl-alpha-D-glucosamine. Histidine 362 serves as the catalytic Proton acceptor. The UDP-N-acetyl-alpha-D-glucosamine site is built by tyrosine 365 and asparagine 376. Acetyl-CoA is bound by residues 385-386 (NY), alanine 422, and arginine 439.

This sequence in the N-terminal section; belongs to the N-acetylglucosamine-1-phosphate uridyltransferase family. The protein in the C-terminal section; belongs to the transferase hexapeptide repeat family. As to quaternary structure, homotrimer. Mg(2+) is required as a cofactor.

It is found in the cytoplasm. It carries out the reaction alpha-D-glucosamine 1-phosphate + acetyl-CoA = N-acetyl-alpha-D-glucosamine 1-phosphate + CoA + H(+). It catalyses the reaction N-acetyl-alpha-D-glucosamine 1-phosphate + UTP + H(+) = UDP-N-acetyl-alpha-D-glucosamine + diphosphate. Its pathway is nucleotide-sugar biosynthesis; UDP-N-acetyl-alpha-D-glucosamine biosynthesis; N-acetyl-alpha-D-glucosamine 1-phosphate from alpha-D-glucosamine 6-phosphate (route II): step 2/2. The protein operates within nucleotide-sugar biosynthesis; UDP-N-acetyl-alpha-D-glucosamine biosynthesis; UDP-N-acetyl-alpha-D-glucosamine from N-acetyl-alpha-D-glucosamine 1-phosphate: step 1/1. It functions in the pathway bacterial outer membrane biogenesis; LPS lipid A biosynthesis. Functionally, catalyzes the last two sequential reactions in the de novo biosynthetic pathway for UDP-N-acetylglucosamine (UDP-GlcNAc). The C-terminal domain catalyzes the transfer of acetyl group from acetyl coenzyme A to glucosamine-1-phosphate (GlcN-1-P) to produce N-acetylglucosamine-1-phosphate (GlcNAc-1-P), which is converted into UDP-GlcNAc by the transfer of uridine 5-monophosphate (from uridine 5-triphosphate), a reaction catalyzed by the N-terminal domain. This is Bifunctional protein GlmU from Staphylococcus aureus (strain USA300).